Here is a 98-residue protein sequence, read N- to C-terminus: Large ribosomal subunit protein uL23 (98 aa).

Belongs to the universal ribosomal protein uL23 family. Part of the 50S ribosomal subunit. Contacts protein L29, and trigger factor when it is bound to the ribosome.

Its function is as follows. One of the early assembly proteins it binds 23S rRNA. One of the proteins that surrounds the polypeptide exit tunnel on the outside of the ribosome. Forms the main docking site for trigger factor binding to the ribosome. This chain is Large ribosomal subunit protein uL23, found in Cereibacter sphaeroides (strain ATCC 17029 / ATH 2.4.9) (Rhodobacter sphaeroides).